The following is a 137-amino-acid chain: Acidic phospholipase A2 1 (137 aa).

A signal peptide spans 1 to 11 (LVAVCVSLLGA). A propeptide spanning residues 12–19 (ANIPPQPL) is cleaved from the precursor. 7 disulfides stabilise this stretch: cysteine 30/cysteine 89, cysteine 44/cysteine 136, cysteine 46/cysteine 62, cysteine 61/cysteine 117, cysteine 68/cysteine 110, cysteine 78/cysteine 103, and cysteine 96/cysteine 108. 3 residues coordinate Ca(2+): tyrosine 45, glycine 47, and glycine 49. Residues glycine 49 and histidine 65 each coordinate tridecanoate. Histidine 65 is a catalytic residue. Aspartate 66 contacts Ca(2+). Aspartate 111 is an active-site residue.

Monomer. Ca(2+) is required as a cofactor. Expressed by the venom gland.

The protein localises to the secreted. The catalysed reaction is a 1,2-diacyl-sn-glycero-3-phosphocholine + H2O = a 1-acyl-sn-glycero-3-phosphocholine + a fatty acid + H(+). Functionally, snake venom phospholipase A2 (PLA2) that shows anticoagulant and neurotoxic activities. PLA2 catalyzes the calcium-dependent hydrolysis of the 2-acyl groups in 3-sn-phosphoglycerides. The polypeptide is Acidic phospholipase A2 1 (Bungarus caeruleus (Indian krait)).